Consider the following 129-residue polypeptide: 3-aminoacrylate deaminase RutC (129 aa).

This sequence belongs to the RutC family.

The enzyme catalyses (Z)-3-aminoacrylate + H2O + H(+) = 3-oxopropanoate + NH4(+). In terms of biological role, involved in pyrimidine catabolism. Catalyzes the deamination of 3-aminoacrylate to malonic semialdehyde, a reaction that can also occur spontaneously. RutC may facilitate the reaction and modulate the metabolic fitness, rather than catalyzing essential functions. The polypeptide is 3-aminoacrylate deaminase RutC (Rhizobium rhizogenes (strain K84 / ATCC BAA-868) (Agrobacterium radiobacter)).